Reading from the N-terminus, the 233-residue chain is Movement and silencing protein TGBp1 (233 aa).

The region spanning Met-1 to Gln-134 is the (+)RNA virus helicase ATP-binding domain. The (+)RNA virus helicase C-terminal domain occupies Ile-135–Cys-233.

The protein belongs to the Tymovirales TGBp1 protein family. Homodimer and homooligomer. Interacts with capsid protein. Interacts with host AGO1; this interaction targets the host protein for degradation, thereby suppressing the antiviral RNA silencing.

It localises to the host cytoplasm. Transports viral genome to neighboring plant cells directly through plasmosdesmata, without any budding. The movement protein allows efficient cell to cell propagation, by bypassing the host cell wall barrier. Increases plasmodesma size exclusion limit. Acts as a suppressor of RNA-mediated gene silencing, also known as post-transcriptional gene silencing (PTGS), a mechanism of plant viral defense that limits the accumulation of viral RNAs. The sequence is that of Movement and silencing protein TGBp1 from Narcissus mosaic virus (NMV).